A 415-amino-acid chain; its full sequence is Imidazolonepropionase (415 aa).

Fe(3+) contacts are provided by His-76 and His-78. 2 residues coordinate Zn(2+): His-76 and His-78. 3 residues coordinate 4-imidazolone-5-propanoate: Arg-85, Tyr-148, and His-181. Tyr-148 lines the N-formimidoyl-L-glutamate pocket. His-246 is a binding site for Fe(3+). His-246 serves as a coordination point for Zn(2+). 4-imidazolone-5-propanoate is bound at residue Glu-249. Asp-320 provides a ligand contact to Fe(3+). Residue Asp-320 coordinates Zn(2+). 2 residues coordinate N-formimidoyl-L-glutamate: Asn-322 and Gly-324. Thr-325 serves as a coordination point for 4-imidazolone-5-propanoate.

Belongs to the metallo-dependent hydrolases superfamily. HutI family. The cofactor is Zn(2+). Fe(3+) is required as a cofactor.

The protein resides in the cytoplasm. It catalyses the reaction 4-imidazolone-5-propanoate + H2O = N-formimidoyl-L-glutamate. Its pathway is amino-acid degradation; L-histidine degradation into L-glutamate; N-formimidoyl-L-glutamate from L-histidine: step 3/3. Catalyzes the hydrolytic cleavage of the carbon-nitrogen bond in imidazolone-5-propanoate to yield N-formimidoyl-L-glutamate. It is the third step in the universal histidine degradation pathway. In Thermoanaerobacter pseudethanolicus (strain ATCC 33223 / 39E) (Clostridium thermohydrosulfuricum), this protein is Imidazolonepropionase.